The chain runs to 243 residues: Ras-related protein Rab-12 (243 aa).

Met-1 is subject to N-acetylmethionine. Positions 1-36 (MDPSAALHRRPAGGGLGAVSPALSGGQARRRKQPPR) are disordered. Phosphoserine is present on residues Ser-20 and Ser-24. GTP-binding residues include Gly-51, Val-52, Gly-53, Lys-54, Thr-55, Ser-72, and Thr-73. Thr-55 provides a ligand contact to Mg(2+). 2 consecutive short sequence motifs (switch) follow at residues 64–78 (DTFCEACKSTVGVDF) and 96–113 (DTAGQERFNSITSAYYRS). Positions 73 and 96 each coordinate Mg(2+). Residue Gly-99 participates in GTP binding. Residue Ser-105 is modified to Phosphoserine. Asn-154, Lys-155, Asp-157, Ser-185, Ala-186, and Lys-187 together coordinate GTP. Residues Cys-242 and Cys-243 are each lipidated (S-geranylgeranyl cysteine).

The protein belongs to the small GTPase superfamily. Rab family. In terms of assembly, interacts with RABIF and OPTN. Interacts with LRRK2; interaction facilitates phosphorylation of Ser-105. Interacts with GDI1, GDI2 and CHM; these interactions are disrupted by phosphorylation on Ser-105. Interacts with RILPL1 and RILPL2; these interactions are dependent on phosphorylation of Ser-105. Requires Mg(2+) as cofactor. In terms of processing, phosphorylation of Ser-105 in the switch II region by LRRK2 prevents the association of RAB regulatory proteins, including CHM and RAB GDP dissociation inhibitors GDI1 and GDI2. As to expression, highest levels in skeletal and cardiac muscle. Also found in comparable amounts in brain, spinal cord and lung. Also detected in testis where it is expressed by Sertoli cells of the seminiferous tubules (at protein level).

The protein resides in the recycling endosome membrane. The protein localises to the lysosome membrane. It is found in the golgi apparatus membrane. Its subcellular location is the cytoplasmic vesicle. It localises to the autophagosome. The catalysed reaction is GTP + H2O = GDP + phosphate + H(+). With respect to regulation, regulated by guanine nucleotide exchange factors (GEFs) including DENND3 which promote the exchange of bound GDP for free GTP. Regulated by GTPase activating proteins (GAPs) which increase the GTP hydrolysis activity. Inhibited by GDP dissociation inhibitors (GDIs). Its function is as follows. The small GTPases Rab are key regulators of intracellular membrane trafficking, from the formation of transport vesicles to their fusion with membranes. Rabs cycle between an inactive GDP-bound form and an active GTP-bound form that is able to recruit to membranes different sets of downstream effectors directly responsible for vesicle formation, movement, tethering and fusion. RAB12 may play a role in protein transport from recycling endosomes to lysosomes regulating, for instance, the degradation of the transferrin receptor. Involved in autophagy. The polypeptide is Ras-related protein Rab-12 (Rattus norvegicus (Rat)).